The chain runs to 214 residues: Transcriptional activator protein ExaE (214 aa).

The Response regulatory domain maps to 2-118; the sequence is GILLVDDHPM…VVLEAVRRVL (117 aa). Asp53 carries the 4-aspartylphosphate modification. One can recognise an HTH luxR-type domain in the interval 143–208; that stretch reads GNARLQGLTQ…ELVHLAIEAG (66 aa). Positions 167–186 form a DNA-binding region, H-T-H motif; the sequence is TRLIAQQLCISAKTVSNYLT.

In terms of biological role, positive regulator of the expression of the gene qedA and the activity of ADH I but does not affect the activities of ADH IIB or ADH IIG. In Pseudomonas putida (Arthrobacter siderocapsulatus), this protein is Transcriptional activator protein ExaE.